Reading from the N-terminus, the 505-residue chain is Trans-cinnamate 4-monooxygenase (505 aa).

A helical transmembrane segment spans residues 3–23 (LLLIEKTLVALFAAIIGAILI). (E)-cinnamate is bound by residues 213-218 (RSRLAQ) and Ala-306. Cys-447 is a binding site for heme.

The protein belongs to the cytochrome P450 family. Requires heme as cofactor.

The protein localises to the membrane. The enzyme catalyses (E)-cinnamate + reduced [NADPH--hemoprotein reductase] + O2 = (E)-4-coumarate + oxidized [NADPH--hemoprotein reductase] + H2O + H(+). It functions in the pathway phenylpropanoid metabolism; trans-4-coumarate biosynthesis; trans-4-coumarate from trans-cinnamate: step 1/1. Its activity is regulated as follows. Inactivated by piperonylic acid. Catalyzes the first oxidative step of the phenylpropanoid pathway in higher plants by transforming trans-cinnamate into p-coumarate. The compounds formed by this pathway are essential components for lignification, pollination, and defense against ultraviolet light, predators and pathogens. Can also use 2-naphthoic acid as substrate. In Helianthus tuberosus (Jerusalem artichoke), this protein is Trans-cinnamate 4-monooxygenase.